The sequence spans 20 residues: Flagellar filament 33 kDa core protein (20 aa).

This sequence belongs to the bacterial flagellin family. As to quaternary structure, the flagellum consists of an outer layer composed of repeating units of FlaA around a core that contains one or all of five antigenically related polypeptides.

Its subcellular location is the periplasmic flagellum. The protein resides in the periplasm. Its function is as follows. Component of the core of the flagella. The sequence is that of Flagellar filament 33 kDa core protein from Spirochaeta aurantia.